Reading from the N-terminus, the 870-residue chain is NEDD4-like E3 ubiquitin-protein ligase WWP2 (870 aa).

The 117-residue stretch at 1 to 117 (MASASSSRAG…KNNGGKMENT (117 aa)) folds into the C2 domain. The tract at residues 150–300 (SVPNGSAVTD…QLPAAAQAPD (151 aa)) is disordered. Residues 152–171 (PNGSAVTDGSQPPSRESSGT) are compositionally biased toward polar residues. Over residues 198–208 (GGSARTATAAS) the composition is skewed to low complexity. Position 211 is a phosphoserine (Ser211). 2 stretches are compositionally biased toward polar residues: residues 222–235 (VKNS…NGTV) and 262–289 (SVSS…TSGT). The segment covering 290-300 (QQLPAAAQAPD) has biased composition (low complexity). 4 consecutive WW domains span residues 300 to 333 (DALP…RPLP), 330 to 363 (RPLP…RPTA), 405 to 437 (GPLP…DPRT), and 444 to 477 (PALP…DPRP). In terms of domain architecture, HECT spans 536 to 870 (KPYDLRRRLY…IEETEGFGQE (335 aa)). Cys838 serves as the catalytic Glycyl thioester intermediate.

Interacts with SCNN1A, SCNN1B, SCNN1G, WBP1, WBP2 and ATN1. Interacts with ERBB4, NDFIP1 and NDFIP2. Interacts with ARRDC4. Interacts with POU5F1, RBP1, EGR2 and SLC11A2. Interacts (via WW domains) with ARRDC1 (via PPxY motifs); ubiquitinates ARRDC1. Interacts (via WW domains) with ARRDC2 and ARRDC3. Autoubiquitinated. Ubiquitinated by the SCF(FBXL15) complex, leading to its degradation by the proteasome.

It is found in the nucleus. The enzyme catalyses S-ubiquitinyl-[E2 ubiquitin-conjugating enzyme]-L-cysteine + [acceptor protein]-L-lysine = [E2 ubiquitin-conjugating enzyme]-L-cysteine + N(6)-ubiquitinyl-[acceptor protein]-L-lysine.. Its pathway is protein modification; protein ubiquitination. Activated by NDFIP1- and NDFIP2-binding. Its function is as follows. E3 ubiquitin-protein ligase which accepts ubiquitin from an E2 ubiquitin-conjugating enzyme in the form of a thioester and then directly transfers the ubiquitin to targeted substrates. Polyubiquitinates POU5F1 by 'Lys-63'-linked conjugation and promotes it to proteasomal degradation; regulates POU5F1 protein level during differentiation of embryonal carcinoma cells (ECCs) but not in undifferentiated ECCs and embryonic stem cells (ESCs). Ubiquitinates EGR2 and promotes it to proteasomal degradation; in T-cells the ubiquitination inhibits activation-induced cell death. Ubiquitinates SLC11A2; the ubiquitination is enhanced by presence of NDFIP1 and NDFIP2. Ubiquitinates RPB1 and promotes it to proteasomal degradation. This is NEDD4-like E3 ubiquitin-protein ligase WWP2 (Wwp2) from Mus musculus (Mouse).